A 318-amino-acid chain; its full sequence is HPr kinase/phosphorylase (318 aa).

Catalysis depends on residues histidine 146 and lysine 167. 161–168 provides a ligand contact to ATP; sequence GESGLGKS. A Mg(2+)-binding site is contributed by serine 168. Aspartate 185 acts as the Proton acceptor; for phosphorylation activity. Proton donor; for dephosphorylation activity in catalysis. The segment at 209–218 is important for the catalytic mechanism of both phosphorylation and dephosphorylation; it reads LEVRGIGLLD. A Mg(2+)-binding site is contributed by glutamate 210. The active site involves arginine 252. The segment at 273–278 is important for the catalytic mechanism of dephosphorylation; it reads QVVAGR.

The protein belongs to the HPrK/P family. In terms of assembly, homohexamer. Mg(2+) is required as a cofactor.

It carries out the reaction [HPr protein]-L-serine + ATP = [HPr protein]-O-phospho-L-serine + ADP + H(+). The enzyme catalyses [HPr protein]-O-phospho-L-serine + phosphate + H(+) = [HPr protein]-L-serine + diphosphate. Catalyzes the ATP- as well as the pyrophosphate-dependent phosphorylation of a specific serine residue in HPr, a phosphocarrier protein of the phosphoenolpyruvate-dependent sugar phosphotransferase system (PTS). HprK/P also catalyzes the pyrophosphate-producing, inorganic phosphate-dependent dephosphorylation (phosphorolysis) of seryl-phosphorylated HPr (P-Ser-HPr). This chain is HPr kinase/phosphorylase, found in Acidovorax sp. (strain JS42).